The chain runs to 380 residues: Anhydro-N-acetylmuramic acid kinase (380 aa).

Residue 9 to 16 (GTSVDGID) participates in ATP binding.

It belongs to the anhydro-N-acetylmuramic acid kinase family.

It catalyses the reaction 1,6-anhydro-N-acetyl-beta-muramate + ATP + H2O = N-acetyl-D-muramate 6-phosphate + ADP + H(+). It participates in amino-sugar metabolism; 1,6-anhydro-N-acetylmuramate degradation. It functions in the pathway cell wall biogenesis; peptidoglycan recycling. Its function is as follows. Catalyzes the specific phosphorylation of 1,6-anhydro-N-acetylmuramic acid (anhMurNAc) with the simultaneous cleavage of the 1,6-anhydro ring, generating MurNAc-6-P. Is required for the utilization of anhMurNAc either imported from the medium or derived from its own cell wall murein, and thus plays a role in cell wall recycling. The protein is Anhydro-N-acetylmuramic acid kinase of Cyanothece sp. (strain PCC 7425 / ATCC 29141).